The chain runs to 726 residues: ORC ubiquitin ligase 1 (726 aa).

An RING-type; degenerate zinc finger spans residues 18-56 (CHICLGKVRQPVICINNHVFCSICIDLWLKNNSQCPACR). 2 coiled-coil regions span residues 87 to 129 (LRKT…TILD) and 155 to 270 (ETVA…MNSI). A Phosphoserine modification is found at serine 210. A disordered region spans residues 274–335 (ALPADGKGSK…ARQESTSKAE (62 aa)). Residues 280–290 (KGSKGSEEDVA) are compositionally biased toward basic and acidic residues. Over residues 300–320 (KQPSSSTSSSSHLAKPSSSRL) the composition is skewed to low complexity. A compositionally biased stretch (polar residues) spans 321–334 (CDTSSARQESTSKA). 7 positions are modified to phosphoserine: serine 526, serine 553, serine 561, serine 568, serine 570, serine 719, and serine 721. Positions 687-726 (QSPWSTSFVPEKRNKNVNQSTKRKIQSSLSNASPSKATKS) are disordered. The span at 702–726 (NVNQSTKRKIQSSLSNASPSKATKS) shows a compositional bias: polar residues.

As to quaternary structure, associates with ORC complex. Binds to chromatin; association is cell cycle-regulated, absent from mitotic chromosomes, is associated with chromatin from G1 and partially released from chromatin from mid S-phase. Post-translationally, auto-ubiquitinated.

It localises to the chromosome. It catalyses the reaction S-ubiquitinyl-[E2 ubiquitin-conjugating enzyme]-L-cysteine + [acceptor protein]-L-lysine = [E2 ubiquitin-conjugating enzyme]-L-cysteine + N(6)-ubiquitinyl-[acceptor protein]-L-lysine.. Its function is as follows. E3 ubiquitin ligase essential for DNA replication origin activation during S phase. Acts as a replication origin selector which selects the origins to be fired and catalyzes the multi-mono-ubiquitination of a subset of chromatin-bound ORC3 and ORC5 during S-phase. The protein is ORC ubiquitin ligase 1 (OBI1) of Pongo abelii (Sumatran orangutan).